The sequence spans 174 residues: Soma ferritin (174 aa).

Residues 8–157 (QNYHAESEAG…DYITNLKRVG (150 aa)) enclose the Ferritin-like diiron domain. Positions 25, 60, 63, 105, and 139 each coordinate Fe cation.

Belongs to the ferritin family. In terms of assembly, oligomer of 12 or 24 subunits. The functional molecule is roughly spherical and contains a central cavity into which the polymeric mineral iron core is deposited. Expressed in somatic tissues but not in oocytes.

It is found in the cytoplasm. It catalyses the reaction 4 Fe(2+) + O2 + 4 H(+) = 4 Fe(3+) + 2 H2O. In terms of biological role, stores iron in a soluble, non-toxic, readily available form. Important for iron homeostasis. Has ferroxidase activity. Iron is taken up in the ferrous form and deposited as ferric hydroxides after oxidation. The protein is Soma ferritin of Lymnaea stagnalis (Great pond snail).